We begin with the raw amino-acid sequence, 308 residues long: Ecto-ADP-ribosyltransferase 5 (308 aa).

The N-terminal stretch at Met1–Ala23 is a signal peptide. An intrachain disulfide couples Cys43 to Cys259. A TR mART core domain is found at Ala63 to Thr253. Position 100 (Tyr100) interacts with NAD(+). Asn102 carries an N-linked (GlcNAc...) asparagine glycan. Residues Arg161 and Gln181 each contribute to the NAD(+) site. Arg161 is a catalytic residue. Ser184 is a catalytic residue. Asn197 carries an N-linked (GlcNAc...) asparagine glycan. Ser215 serves as a coordination point for NAD(+). Residue Glu222 is part of the active site. N-linked (GlcNAc...) asparagine glycosylation occurs at Asn251.

It belongs to the Arg-specific ADP-ribosyltransferase family.

The protein resides in the secreted. It is found in the membrane. It carries out the reaction L-arginyl-[protein] + NAD(+) = N(omega)-(ADP-D-ribosyl)-L-arginyl-[protein] + nicotinamide + H(+). The chain is Ecto-ADP-ribosyltransferase 5 (Art5) from Rattus norvegicus (Rat).